The chain runs to 130 residues: Small ribosomal subunit protein uS8 (130 aa).

This sequence belongs to the universal ribosomal protein uS8 family. As to quaternary structure, part of the 30S ribosomal subunit. Contacts proteins S5 and S12.

Its function is as follows. One of the primary rRNA binding proteins, it binds directly to 16S rRNA central domain where it helps coordinate assembly of the platform of the 30S subunit. The polypeptide is Small ribosomal subunit protein uS8 (Yersinia enterocolitica serotype O:8 / biotype 1B (strain NCTC 13174 / 8081)).